The sequence spans 531 residues: Putative heme-binding protein HQ_1094A (531 aa).

Position 177 (H177) interacts with heme. The segment at 269 to 340 (AHGEAHGHAH…STNTNTQDSE (72 aa)) is disordered. Over residues 271-281 (GEAHGHAHGDS) the composition is skewed to basic and acidic residues. The span at 284 to 306 (GSGGGGGSSHGQSPGGASAGGSA) shows a compositional bias: gly residues. The span at 308–317 (GTEDADHSDS) shows a compositional bias: basic and acidic residues. Residues 318–338 (RSTTSADTTQSDTSTNTNTQD) are compositionally biased toward low complexity. The region spanning 441-529 (GTMGMFYTVK…VLSERPRHVF (89 aa)) is the ABM domain.

The protein in the N-terminal section; belongs to the ChdC family.

This is Putative heme-binding protein HQ_1094A from Haloquadratum walsbyi (strain DSM 16790 / HBSQ001).